Here is a 434-residue protein sequence, read N- to C-terminus: UDP-N-acetylmuramate--L-alanine ligase (434 aa).

110 to 116 contributes to the ATP binding site; it reads GAHGKTS.

The protein belongs to the MurCDEF family.

It is found in the cytoplasm. It carries out the reaction UDP-N-acetyl-alpha-D-muramate + L-alanine + ATP = UDP-N-acetyl-alpha-D-muramoyl-L-alanine + ADP + phosphate + H(+). It functions in the pathway cell wall biogenesis; peptidoglycan biosynthesis. Its function is as follows. Cell wall formation. This chain is UDP-N-acetylmuramate--L-alanine ligase, found in Limosilactobacillus reuteri (strain DSM 20016) (Lactobacillus reuteri).